A 415-amino-acid polypeptide reads, in one-letter code: Gamma-glutamyl phosphate reductase (415 aa).

This sequence belongs to the gamma-glutamyl phosphate reductase family.

It is found in the cytoplasm. It carries out the reaction L-glutamate 5-semialdehyde + phosphate + NADP(+) = L-glutamyl 5-phosphate + NADPH + H(+). Its pathway is amino-acid biosynthesis; L-proline biosynthesis; L-glutamate 5-semialdehyde from L-glutamate: step 2/2. Catalyzes the NADPH-dependent reduction of L-glutamate 5-phosphate into L-glutamate 5-semialdehyde and phosphate. The product spontaneously undergoes cyclization to form 1-pyrroline-5-carboxylate. The sequence is that of Gamma-glutamyl phosphate reductase from Bacillus cereus (strain 03BB102).